Here is a 299-residue protein sequence, read N- to C-terminus: ATP phosphoribosyltransferase (299 aa).

This sequence belongs to the ATP phosphoribosyltransferase family. Long subfamily. In terms of assembly, equilibrium between an active dimeric form, an inactive hexameric form and higher aggregates. Interconversion between the various forms is largely reversible and is influenced by the natural substrates and inhibitors of the enzyme. It depends on Mg(2+) as a cofactor.

It is found in the cytoplasm. The enzyme catalyses 1-(5-phospho-beta-D-ribosyl)-ATP + diphosphate = 5-phospho-alpha-D-ribose 1-diphosphate + ATP. It functions in the pathway amino-acid biosynthesis; L-histidine biosynthesis; L-histidine from 5-phospho-alpha-D-ribose 1-diphosphate: step 1/9. Its activity is regulated as follows. Feedback inhibited by histidine. In terms of biological role, catalyzes the condensation of ATP and 5-phosphoribose 1-diphosphate to form N'-(5'-phosphoribosyl)-ATP (PR-ATP). Has a crucial role in the pathway because the rate of histidine biosynthesis seems to be controlled primarily by regulation of HisG enzymatic activity. In Yersinia pseudotuberculosis serotype O:1b (strain IP 31758), this protein is ATP phosphoribosyltransferase.